Here is a 161-residue protein sequence, read N- to C-terminus: MGQRILGLDPGLAIVGFGALLCPDSRQGSLELLDFGVISTPAGAEIGDRLETIYQDLHQLIDLVQPDAVAVEKLFFYRMGNTIAVAQARGVLMLVLRQRRLPYCEFTPAQVKQALTGYGNAPKLAVQQAVQRELQLDAIPRPDDAADAVALALTAWFQQLA.

Catalysis depends on residues Asp-9, Glu-72, and Asp-144. The Mg(2+) site is built by Asp-9, Glu-72, and Asp-144.

It belongs to the RuvC family. Homodimer which binds Holliday junction (HJ) DNA. The HJ becomes 2-fold symmetrical on binding to RuvC with unstacked arms; it has a different conformation from HJ DNA in complex with RuvA. In the full resolvosome a probable DNA-RuvA(4)-RuvB(12)-RuvC(2) complex forms which resolves the HJ. The cofactor is Mg(2+).

The protein localises to the cytoplasm. The catalysed reaction is Endonucleolytic cleavage at a junction such as a reciprocal single-stranded crossover between two homologous DNA duplexes (Holliday junction).. The RuvA-RuvB-RuvC complex processes Holliday junction (HJ) DNA during genetic recombination and DNA repair. Endonuclease that resolves HJ intermediates. Cleaves cruciform DNA by making single-stranded nicks across the HJ at symmetrical positions within the homologous arms, yielding a 5'-phosphate and a 3'-hydroxyl group; requires a central core of homology in the junction. The consensus cleavage sequence is 5'-(A/T)TT(C/G)-3'. Cleavage occurs on the 3'-side of the TT dinucleotide at the point of strand exchange. HJ branch migration catalyzed by RuvA-RuvB allows RuvC to scan DNA until it finds its consensus sequence, where it cleaves and resolves the cruciform DNA. This Synechococcus sp. (strain ATCC 27144 / PCC 6301 / SAUG 1402/1) (Anacystis nidulans) protein is Crossover junction endodeoxyribonuclease RuvC.